Consider the following 259-residue polypeptide: Methyltransferase sdnD (259 aa).

Belongs to the FkbM methyltransferase family.

The protein operates within antibiotic biosynthesis. Methyltransferase; part of the gene cluster that mediates the biosynthesis of sordarin and hypoxysordarin, glycoside antibiotics with a unique tetracyclic diterpene aglycone structure. First, the geranylgeranyl diphosphate synthase sdnC constructs GGDP from farnesyl diphosphate and isopentenyl diphosphate. The diterpene cyclase sdnA then catalyzes the cyclization of GGDP to afford cycloaraneosene. Cycloaraneosene is then hydroxylated four times by the putative cytochrome P450 monooxygenases sdnB, sdnE, sdnF and sdnH to give a hydroxylated cycloaraneosene derivative such as cycloaraneosene-8,9,13,19-tetraol. Although the order of the hydroxylations is unclear, at least C8, C9 and C13 of the cycloaraneosene skeleton are hydroxylated before the sordaricin formation. Dehydration of the 13-hydroxy group of the hydroxylated cycloaraneosene derivative might be catalyzed by an unassigned hypothetical protein such as sdnG and sdnP to construct the cyclopentadiene moiety. The FAD-dependent oxidoreductase sdnN is proposed to catalyze the oxidation at C9 of the hydroxylated cycloaraneosene derivative and also catalyze the Baeyer-Villiger oxidation to give the lactone intermediate. The presumed lactone intermediate would be hydrolyzed to give an acrolein moiety and a carboxylate moiety. Then, [4+2]cycloaddition would occur between the acrolein moiety and the cyclopentadiene moiety to give sordaricin. SdnN might also be involved in the [4+2]cycloaddition after the hypothesized oxidation to accommodate the oxidized product and prompt the [4+2]cycloaddition. GDP-6-deoxy-D-altrose may be biosynthesized from GDP-D-mannose by the putative GDP-mannose-4,6-dehydratase sdnI and the short-chain dehydrogenase sdnK. The glycosyltransferase sdnJ catalyzes the attachment of 6-deoxy-D-altrose onto the 19-hydroxy group of sordaricin to give 4'-O-demethylsordarin. The methyltransferase sdnD would complete the biosynthesis of sordarin. Sordarin can be further modified into hypoxysordarin. The unique acyl chain at the 3'-hydroxy group of hypoxysordarin would be constructed by an iterative type I PKS sdnO and the trans-acting polyketide methyltransferase sdnL. SdnL would be responsible for the introduction of an alpha-methyl group of the polyketide chain. Alternatively, the beta-lactamase-like protein sdnR might be responsible for the cleavage and transfer of the polyketide chain from the PKS sdnO to sordarin. Two putative cytochrome P450 monooxygenases, sdnQ and sdnT, might catalyze the epoxidations of the polyketide chain to complete the biosynthesis of hypoxysordarin. Transcriptional regulators sdnM and sdnS are presumably encoded for the transcriptional regulation of the expression of the sdn gene cluster. This is Methyltransferase sdnD from Sordaria araneosa (Pleurage araneosa).